The chain runs to 221 residues: MALPSVTALQVENVAFPPTLIKPPASANTLFLGGAGERGLHIQDKFVKFTAIGIYLQDTAVPSLAVKWKGKPVDELTESVQFFRDIVTGPFEKFMQVTMILPLTGQQYSEKVSENCVAIWKHLGIYTDEEGKAIDKFVSVFKDQTFPPGSSILFTVLPKGSLAISFSKDGSIPEVESAVIDNKLLSEAVLESMIGAHGVSPAAKQSLASRLSELFKHHAEV.

Substrate contacts are provided by T50, N115, and S192.

This sequence belongs to the chalcone isomerase family.

The catalysed reaction is a chalcone = a flavanone.. The protein operates within secondary metabolite biosynthesis; flavonoid biosynthesis. Functionally, catalyzes the intramolecular cyclization of bicyclic chalcones into tricyclic (S)-flavanones. Responsible for the isomerization of 4,2',4',6'-tetrahydroxychalcone (also termed chalcone) into naringenin. The chain is Chalcone--flavanone isomerase 2 (CHI2) from Lotus japonicus (Lotus corniculatus var. japonicus).